The primary structure comprises 132 residues: Small ribosomal subunit protein uS8 (132 aa).

It belongs to the universal ribosomal protein uS8 family. As to quaternary structure, part of the 30S ribosomal subunit. Contacts proteins S5 and S12.

Functionally, one of the primary rRNA binding proteins, it binds directly to 16S rRNA central domain where it helps coordinate assembly of the platform of the 30S subunit. In Brucella abortus (strain S19), this protein is Small ribosomal subunit protein uS8.